A 136-amino-acid chain; its full sequence is MPAPVVLILAAGRGECFLASGGNTHKCIGWRQSPEVAPYRWPFEENGRTFDLAIEPQITTNDLRLMLRLALAGGGITIATQETFRPYIESGKLVSLLDDFLPQFPGFYLYFPQRRNIAPKLRALIDYVKEWRQQLA.

The protein belongs to the LysR transcriptional regulatory family.

The protein is Putative LysR family substrate binding domain-containing protein YagP (yagP) of Escherichia coli (strain K12).